Here is a 277-residue protein sequence, read N- to C-terminus: Small ribosomal subunit protein uS3 (277 aa).

The KH type-2 domain maps to I43–K111. Positions F216 to E277 are disordered. Basic and acidic residues predominate over residues E264–E277.

It belongs to the universal ribosomal protein uS3 family. As to quaternary structure, part of the 30S ribosomal subunit. Forms a tight complex with proteins S10 and S14.

Its function is as follows. Binds the lower part of the 30S subunit head. Binds mRNA in the 70S ribosome, positioning it for translation. In Bifidobacterium animalis subsp. lactis (strain AD011), this protein is Small ribosomal subunit protein uS3.